We begin with the raw amino-acid sequence, 312 residues long: Aspartate carbamoyltransferase catalytic subunit (312 aa).

Positions 58 and 59 each coordinate carbamoyl phosphate. K86 serves as a coordination point for L-aspartate. 3 residues coordinate carbamoyl phosphate: R108, H136, and Q139. Residues R169 and R223 each coordinate L-aspartate. Positions 264 and 265 each coordinate carbamoyl phosphate.

This sequence belongs to the aspartate/ornithine carbamoyltransferase superfamily. ATCase family. As to quaternary structure, heterododecamer (2C3:3R2) of six catalytic PyrB chains organized as two trimers (C3), and six regulatory PyrI chains organized as three dimers (R2).

The enzyme catalyses carbamoyl phosphate + L-aspartate = N-carbamoyl-L-aspartate + phosphate + H(+). Its pathway is pyrimidine metabolism; UMP biosynthesis via de novo pathway; (S)-dihydroorotate from bicarbonate: step 2/3. Functionally, catalyzes the condensation of carbamoyl phosphate and aspartate to form carbamoyl aspartate and inorganic phosphate, the committed step in the de novo pyrimidine nucleotide biosynthesis pathway. This is Aspartate carbamoyltransferase catalytic subunit from Desulforamulus reducens (strain ATCC BAA-1160 / DSM 100696 / MI-1) (Desulfotomaculum reducens).